Reading from the N-terminus, the 545-residue chain is CTP synthase (545 aa).

Residues 1–266 (MTTNYIFVTG…DDYICKRFSL (266 aa)) form an amidoligase domain region. Ser-14 provides a ligand contact to CTP. Ser-14 is a UTP binding site. ATP is bound by residues 15–20 (SLGKGI) and Asp-72. Residues Asp-72 and Glu-140 each contribute to the Mg(2+) site. Residues 147-149 (DIE), 187-192 (KTKPTQ), and Lys-223 each bind CTP. UTP-binding positions include 187-192 (KTKPTQ) and Lys-223. Residue 239-241 (KDI) coordinates ATP. One can recognise a Glutamine amidotransferase type-1 domain in the interval 291-542 (TIGMVGKYVA…VKAAGAYQKR (252 aa)). Gly-352 serves as a coordination point for L-glutamine. Residue Cys-379 is the Nucleophile; for glutamine hydrolysis of the active site. L-glutamine-binding positions include 380–383 (LGMQ), Glu-403, and Arg-470. Active-site residues include His-515 and Glu-517.

This sequence belongs to the CTP synthase family. In terms of assembly, homotetramer.

The enzyme catalyses UTP + L-glutamine + ATP + H2O = CTP + L-glutamate + ADP + phosphate + 2 H(+). It carries out the reaction L-glutamine + H2O = L-glutamate + NH4(+). It catalyses the reaction UTP + NH4(+) + ATP = CTP + ADP + phosphate + 2 H(+). The protein operates within pyrimidine metabolism; CTP biosynthesis via de novo pathway; CTP from UDP: step 2/2. Allosterically activated by GTP, when glutamine is the substrate; GTP has no effect on the reaction when ammonia is the substrate. The allosteric effector GTP functions by stabilizing the protein conformation that binds the tetrahedral intermediate(s) formed during glutamine hydrolysis. Inhibited by the product CTP, via allosteric rather than competitive inhibition. Its function is as follows. Catalyzes the ATP-dependent amination of UTP to CTP with either L-glutamine or ammonia as the source of nitrogen. Regulates intracellular CTP levels through interactions with the four ribonucleotide triphosphates. This chain is CTP synthase, found in Pectobacterium atrosepticum (strain SCRI 1043 / ATCC BAA-672) (Erwinia carotovora subsp. atroseptica).